A 342-amino-acid chain; its full sequence is Heat-inducible transcription repressor HrcA (342 aa).

Belongs to the HrcA family.

Functionally, negative regulator of class I heat shock genes (grpE-dnaK-dnaJ and groELS operons). Prevents heat-shock induction of these operons. The sequence is that of Heat-inducible transcription repressor HrcA from Methylibium petroleiphilum (strain ATCC BAA-1232 / LMG 22953 / PM1).